The chain runs to 37 residues: TFIDVDCTVSKECWAPCKAAFGVDRGKCMGKKCKCYV.

3 disulfides stabilise this stretch: Cys-7/Cys-28, Cys-13/Cys-33, and Cys-17/Cys-35.

This sequence belongs to the short scorpion toxin superfamily. Potassium channel inhibitor family. Alpha-KTx 01 subfamily. As to expression, expressed by the venom gland.

It localises to the secreted. Its function is as follows. Reversibly blocks the high conductance calcium-activated potassium channels composed of only alpha subunits (KCa1.1/KCNMA1). Unreversibly blocks the high conductance calcium-activated potassium channels composed of alpha and beta1 subunits (KCNMA1 and KCNMB1). Unreversibly and weakly blocks the high conductance calcium-activated potassium channels composed of alpha and beta4 (KCNMA1 and KCNMB4). The protein is Potassium channel toxin alpha-KTx 1.11 of Centruroides noxius (Mexican scorpion).